We begin with the raw amino-acid sequence, 309 residues long: Glutaminase (309 aa).

Positions 65, 117, 162, 169, 193, 245, and 263 each coordinate substrate.

Belongs to the glutaminase family. Homotetramer.

It carries out the reaction L-glutamine + H2O = L-glutamate + NH4(+). This chain is Glutaminase, found in Bacillus mycoides (strain KBAB4) (Bacillus weihenstephanensis).